The sequence spans 298 residues: Golgi to ER traffic protein 2 (298 aa).

Topologically, residues 1–164 are cytoplasmic; the sequence is MSEPVVDTAE…LEYNTYNQKL (164 aa). The disordered stretch occupies residues 40–92; sequence ILSQGSSVKTSGVKSVLDQEKEATPSHDEDPEIQDITEITTPPPRTPPIGEDA. Positions 42-55 are enriched in low complexity; that stretch reads SQGSSVKTSGVKSV. Residues 56–67 are compositionally biased toward basic and acidic residues; the sequence is LDQEKEATPSHD. Residues 165–185 traverse the membrane as a helical segment; the sequence is WKFRFLLVRVSVTLFNFFYHY. The Lumenal portion of the chain corresponds to 186-211; sequence INLSNFHASNYAYVRDLSSEKYPVRD. Residues 212–231 traverse the membrane as a helical segment; it reads FFTWFATTEVVLVAAYYSIF. Topologically, residues 232 to 275 are cytoplasmic; that stretch reads HSLGLFHAANQNSFVLKAMSMGSMVLPQLEHYKPLVARFLGYYE. The helical transmembrane segment at 276–296 threads the bilayer; that stretch reads LLGIVLGDLSLVIVLFGLLSF. Residues 297–298 are Lumenal-facing; it reads AN.

It belongs to the GET2 family. As to quaternary structure, component of the Golgi to ER traffic (GET) complex, which is composed of GET1, GET2 and GET3. Within the complex, GET1 and GET2 form a heterotetramer which is stabilized by phosphatidylinositol binding and which binds to the GET3 homodimer.

The protein resides in the endoplasmic reticulum membrane. It is found in the golgi apparatus membrane. In terms of biological role, required for the post-translational delivery of tail-anchored (TA) proteins to the endoplasmic reticulum. Together with GET1, acts as a membrane receptor for soluble GET3, which recognizes and selectively binds the transmembrane domain of TA proteins in the cytosol. The GET complex cooperates with the HDEL receptor ERD2 to mediate the ATP-dependent retrieval of resident ER proteins that contain a C-terminal H-D-E-L retention signal from the Golgi to the ER. The protein is Golgi to ER traffic protein 2 of Candida albicans (strain SC5314 / ATCC MYA-2876) (Yeast).